Reading from the N-terminus, the 113-residue chain is Ribosome-binding factor A (113 aa).

The protein belongs to the RbfA family. As to quaternary structure, monomer. Binds 30S ribosomal subunits, but not 50S ribosomal subunits or 70S ribosomes.

It localises to the cytoplasm. Its function is as follows. One of several proteins that assist in the late maturation steps of the functional core of the 30S ribosomal subunit. Associates with free 30S ribosomal subunits (but not with 30S subunits that are part of 70S ribosomes or polysomes). Required for efficient processing of 16S rRNA. May interact with the 5'-terminal helix region of 16S rRNA. This Oceanobacillus iheyensis (strain DSM 14371 / CIP 107618 / JCM 11309 / KCTC 3954 / HTE831) protein is Ribosome-binding factor A.